Reading from the N-terminus, the 472-residue chain is NADH-quinone oxidoreductase subunit N 2 (472 aa).

A run of 13 helical transmembrane segments spans residues 3–23 (WMSF…LLLS), 34–54 (HVAA…SVGA), 67–87 (LFSQ…VTLC), 106–126 (FVCT…VVFI), 156–176 (FLVG…LYGA), 198–218 (VVIG…VFPF), 233–253 (VSAY…VRVI), 263–283 (LVHV…LAAI), 291–311 (LLAY…LSMN), 317–337 (AAVF…LVLV), 360–380 (ILAL…PTVG), 398–418 (TLVL…LLVI), and 441–461 (LLSG…NQII).

Belongs to the complex I subunit 2 family. As to quaternary structure, NDH-1 is composed of 14 different subunits. Subunits NuoA, H, J, K, L, M, N constitute the membrane sector of the complex.

It localises to the cell inner membrane. The catalysed reaction is a quinone + NADH + 5 H(+)(in) = a quinol + NAD(+) + 4 H(+)(out). Its function is as follows. NDH-1 shuttles electrons from NADH, via FMN and iron-sulfur (Fe-S) centers, to quinones in the respiratory chain. The immediate electron acceptor for the enzyme in this species is believed to be ubiquinone. Couples the redox reaction to proton translocation (for every two electrons transferred, four hydrogen ions are translocated across the cytoplasmic membrane), and thus conserves the redox energy in a proton gradient. The protein is NADH-quinone oxidoreductase subunit N 2 of Syntrophobacter fumaroxidans (strain DSM 10017 / MPOB).